A 395-amino-acid chain; its full sequence is MRN complex-interacting protein (395 aa).

Basic and acidic residues predominate over residues 90-100; that stretch reads DPKSEQEEAHV. Disordered regions lie at residues 90–155 and 180–275; these read DPKS…GGNC and KRSS…FGES. Polar residues predominate over residues 104 to 113; that stretch reads SKYTDQTTEG. Residues 117–127 show a composition bias toward acidic residues; it reads EKDDEDEDENV. The short motif at 142-145 is the Nuclear localization signal (NLS) element; it reads RKKM. The segment covering 183–195 has biased composition (low complexity); it reads SSSWNKGSVSKYS. Polar residues-rich tracts occupy residues 224 to 244 and 260 to 270; these read ACSSSTNTMENSIGNKQQIKS and QSESPSVSSHQ.

Belongs to the MRNIP family.

The protein localises to the nucleus. It is found in the nucleoplasm. In terms of biological role, plays a role in the cellular response to DNA damage and the maintenance of genome stability through its association with the MRN damage-sensing complex. Promotes chromatin loading and activity of the MRN complex to facilitate subsequent ATM-mediated DNA damage response signaling and DNA repair. The polypeptide is MRN complex-interacting protein (Danio rerio (Zebrafish)).